Here is a 339-residue protein sequence, read N- to C-terminus: D-alanine--D-alanine ligase (339 aa).

Residues 115-327 form the ATP-grasp domain; the sequence is KHIFRSLGID…FNELVKIIIE (213 aa). ATP is bound at residue 142–211; that stretch reads KIDYPYVLKP…EEYIPGIELH (70 aa). Asp-279, Glu-293, and Asn-295 together coordinate Mg(2+).

The protein belongs to the D-alanine--D-alanine ligase family. It depends on Mg(2+) as a cofactor. Mn(2+) serves as cofactor.

The protein localises to the cytoplasm. It catalyses the reaction 2 D-alanine + ATP = D-alanyl-D-alanine + ADP + phosphate + H(+). The protein operates within cell wall biogenesis; peptidoglycan biosynthesis. In terms of biological role, cell wall formation. The sequence is that of D-alanine--D-alanine ligase from Wolbachia sp. subsp. Brugia malayi (strain TRS).